Consider the following 20-residue polypeptide: Zinc metalloproteinase-disintegrin-like uracoina-1 (20 aa).

This sequence belongs to the venom metalloproteinase (M12B) family. P-III subfamily. Monomer. Requires Zn(2+) as cofactor. As to expression, expressed by the venom gland.

The protein localises to the secreted. With respect to regulation, inhibited by ethylenediaminetetraacetic acid (EDTA) and 1,10-phenanthroline. Not inhibited by tosyl-L-lysine chloromethyl ketone (TCLK) and phenylmethanesulfonylfluoride (PMSF). Snake venom zinc metalloprotease that possesses hemorrhagic activity (minimum hemorrhagic dose, MHD=4.7 ug) when injected intradermally into mice. Degrades the alpha-chain of fibrinogen (FGA). This Crotalus vegrandis (Uracoan rattlesnake) protein is Zinc metalloproteinase-disintegrin-like uracoina-1.